A 173-amino-acid chain; its full sequence is Ribosome maturation factor RimM (173 aa).

The PRC barrel domain occupies 95–169 (PDEFYDHELE…TIVIDPPEGL (75 aa)).

The protein belongs to the RimM family. As to quaternary structure, binds ribosomal protein uS19.

It is found in the cytoplasm. Its function is as follows. An accessory protein needed during the final step in the assembly of 30S ribosomal subunit, possibly for assembly of the head region. Essential for efficient processing of 16S rRNA. May be needed both before and after RbfA during the maturation of 16S rRNA. It has affinity for free ribosomal 30S subunits but not for 70S ribosomes. In Mycolicibacterium smegmatis (strain ATCC 700084 / mc(2)155) (Mycobacterium smegmatis), this protein is Ribosome maturation factor RimM.